A 114-amino-acid polypeptide reads, in one-letter code: Progonadoliberin-2 (114 aa).

The signal sequence occupies residues M1–A25. A disordered region spans residues P22–G80. G35 carries the post-translational modification Glycine amide.

Belongs to the GnRH family. Midbrain.

Its subcellular location is the secreted. Functionally, stimulates the secretion of gonadotropins; it stimulates the secretion of both luteinizing and follicle-stimulating hormones. This chain is Progonadoliberin-2 (GNRH2), found in Tupaia belangeri (Common tree shrew).